Here is a 401-residue protein sequence, read N- to C-terminus: Exodeoxyribonuclease 7 large subunit (401 aa).

This sequence belongs to the XseA family. In terms of assembly, heterooligomer composed of large and small subunits.

Its subcellular location is the cytoplasm. It catalyses the reaction Exonucleolytic cleavage in either 5'- to 3'- or 3'- to 5'-direction to yield nucleoside 5'-phosphates.. Bidirectionally degrades single-stranded DNA into large acid-insoluble oligonucleotides, which are then degraded further into small acid-soluble oligonucleotides. This chain is Exodeoxyribonuclease 7 large subunit, found in Syntrophotalea carbinolica (strain DSM 2380 / NBRC 103641 / GraBd1) (Pelobacter carbinolicus).